Consider the following 150-residue polypeptide: D-aminoacyl-tRNA deacylase (150 aa).

Residues 138-139 (GP) carry the Gly-cisPro motif, important for rejection of L-amino acids motif.

This sequence belongs to the DTD family. In terms of assembly, homodimer.

It is found in the cytoplasm. It carries out the reaction glycyl-tRNA(Ala) + H2O = tRNA(Ala) + glycine + H(+). The catalysed reaction is a D-aminoacyl-tRNA + H2O = a tRNA + a D-alpha-amino acid + H(+). In terms of biological role, an aminoacyl-tRNA editing enzyme that deacylates mischarged D-aminoacyl-tRNAs. Also deacylates mischarged glycyl-tRNA(Ala), protecting cells against glycine mischarging by AlaRS. Acts via tRNA-based rather than protein-based catalysis; rejects L-amino acids rather than detecting D-amino acids in the active site. By recycling D-aminoacyl-tRNA to D-amino acids and free tRNA molecules, this enzyme counteracts the toxicity associated with the formation of D-aminoacyl-tRNA entities in vivo and helps enforce protein L-homochirality. In Bacteroides fragilis (strain ATCC 25285 / DSM 2151 / CCUG 4856 / JCM 11019 / LMG 10263 / NCTC 9343 / Onslow / VPI 2553 / EN-2), this protein is D-aminoacyl-tRNA deacylase.